The chain runs to 71 residues: MFLFPSLLSSFCITLRSISCDLFIFQIEYSFLLPRNKMKNKKLKMKYFYFILINLFSNCDLTHFFQNRNDL.

A signal peptide spans 1-19 (MFLFPSLLSSFCITLRSIS).

This is an uncharacterized protein from Pasteurella multocida (strain Pm70).